The primary structure comprises 515 residues: Phenylalanine--tRNA ligase beta subunit (515 aa).

The B5 domain maps to 263-334; the sequence is HEYVKIYVDE…IVMGYNQMPR (72 aa). Mg(2+) contacts are provided by N312, D318, E321, and D322.

Belongs to the phenylalanyl-tRNA synthetase beta subunit family. Type 2 subfamily. In terms of assembly, tetramer of two alpha and two beta subunits. Requires Mg(2+) as cofactor.

It localises to the cytoplasm. It carries out the reaction tRNA(Phe) + L-phenylalanine + ATP = L-phenylalanyl-tRNA(Phe) + AMP + diphosphate + H(+). The sequence is that of Phenylalanine--tRNA ligase beta subunit from Pyrobaculum aerophilum (strain ATCC 51768 / DSM 7523 / JCM 9630 / CIP 104966 / NBRC 100827 / IM2).